Reading from the N-terminus, the 423-residue chain is Histidine--tRNA ligase (423 aa).

Belongs to the class-II aminoacyl-tRNA synthetase family. Homodimer.

It localises to the cytoplasm. The enzyme catalyses tRNA(His) + L-histidine + ATP = L-histidyl-tRNA(His) + AMP + diphosphate + H(+). The protein is Histidine--tRNA ligase of Geobacillus sp. (strain WCH70).